Consider the following 77-residue polypeptide: Apelin (77 aa).

A signal peptide spans 1-22 (MNVKILTLVIVLVVSLLCSASA). The disordered stretch occupies residues 21-77 (SAGPMASTEHSKEIEEVGSMRTPLRQNPARAGRSQRPAGWRRRRPRPRLSHKGPMPF). A compositionally biased stretch (basic residues) spans 59 to 71 (GWRRRRPRPRLSH).

This sequence belongs to the apelin family.

It is found in the secreted. It localises to the extracellular space. Peptide hormone that functions as endogenous ligand for the G-protein-coupled apelin receptor (aplnra and/or aplnrb), that plays a role in cadiovascular homeostasis. Functions as a balanced agonist activating both G(i) protein pathway and beta-arrestin pathway of APLNR. Downstream G proteins activation, apelin can inhibit cAMP production and activate key intracellular effectors such as ERKs. On the other hand, APLNR activation induces beta-arrestin recruitment to the membrane leading to desensitization and internalization of the receptor. Apelin blunts cardiac hypertrophic induction from APLNR on response to pathological stimuli, but also induces myocardial hypertrophy under normal conditions. Involved in the regulation of cardiac precursor cell movements during gastrulation and heart morphogenesis. Plays a role in early coronary blood vessels formation. Mediates myocardial contractility in an ERK1/2-dependent manner. May also have a role in the central control of body fluid homeostasis. This Danio rerio (Zebrafish) protein is Apelin.